The sequence spans 77 residues: MGRSFYHFLMTYRDPKLTDQKTEFANNAYRDHSFPKQTRNYHILCDYLEFNAPYLPGMSIFDELWDAYLLDEEKNKH.

This sequence belongs to the UPF0346 family.

This is UPF0346 protein LMOf2365_1885 from Listeria monocytogenes serotype 4b (strain F2365).